A 395-amino-acid polypeptide reads, in one-letter code: S-adenosylmethionine synthase (395 aa).

E10 contacts Mg(2+). H16 contributes to the ATP binding site. K(+) is bound at residue E44. Positions 57 and 100 each coordinate L-methionine. ATP is bound by residues 168 to 170, 236 to 239, 253 to 254, A270, K274, and K278; these read DGK, SGRF, and RK. Residue K278 coordinates L-methionine.

The protein belongs to the AdoMet synthase family. As to quaternary structure, homotetramer. It depends on Mn(2+) as a cofactor. Mg(2+) serves as cofactor. The cofactor is Co(2+). Requires K(+) as cofactor.

It localises to the cytoplasm. It catalyses the reaction L-methionine + ATP + H2O = S-adenosyl-L-methionine + phosphate + diphosphate. It functions in the pathway amino-acid biosynthesis; S-adenosyl-L-methionine biosynthesis; S-adenosyl-L-methionine from L-methionine: step 1/1. Its function is as follows. Catalyzes the formation of S-adenosylmethionine from methionine and ATP. The reaction comprises two steps that are both catalyzed by the same enzyme: formation of S-adenosylmethionine (AdoMet) and triphosphate, and subsequent hydrolysis of the triphosphate. This chain is S-adenosylmethionine synthase (METK), found in Populus deltoides (Eastern poplar).